The sequence spans 29 residues: MSDELIHVVIALGLVISFGLGAITAGVLR.

The helical transmembrane segment at 8 to 28 (VVIALGLVISFGLGAITAGVL) threads the bilayer.

It belongs to the inovirus G7P protein family.

The protein localises to the virion. Its subcellular location is the host membrane. Its function is as follows. May initiate with G9P the virion concomitant assembly-budding process, by interacting with the packaging signal of the viral genome. The assembly-budding takes place at the host inner membrane. In turn, G7P and G9P are present at the end of the filamentous virion that emerges first from the bacterial host. This chain is Tail virion protein G7P (VII), found in Escherichia coli (Bacteriophage I2-2).